The sequence spans 869 residues: DNA mismatch repair protein MutS (869 aa).

602 to 609 is an ATP binding site; it reads GPNMSGKS.

It belongs to the DNA mismatch repair MutS family.

This protein is involved in the repair of mismatches in DNA. It is possible that it carries out the mismatch recognition step. This protein has a weak ATPase activity. In Staphylococcus carnosus (strain TM300), this protein is DNA mismatch repair protein MutS.